Consider the following 257-residue polypeptide: MLILISPAKTLDYQSPLATTRYTQPELLDHSQQLIHQVRQLSAPQIARLMGISDKLADLNATRFHDWQPHFTPDNARQAILAFKGDVYTGLQAETFSDADFDFAQQHLRMLSGLYGLLRPLDLMQPYRLEMGIRLENPRGKDLYQFWGDIITDKLNETLASQGDRVVINLASEEYFKSVKPKKLNAELIKPVFLDEKNGKFKVISFYAKKARGLMSRFIIENRLTKPEQLTAFNSEGYFFDEETSTQDELVFKRYEQ.

Belongs to the UPF0246 family.

The polypeptide is UPF0246 protein YaaA (Salmonella arizonae (strain ATCC BAA-731 / CDC346-86 / RSK2980)).